A 1018-amino-acid chain; its full sequence is UPF0182 protein Tfu_0541 (1018 aa).

Helical transmembrane passes span 20-40 (LAPV…AANF), 64-84 (ALLF…SVYF), 115-135 (VFFW…ATAE), 171-191 (VIIG…VVVH), 212-232 (VHLS…YWLE), 254-274 (AVLY…VLFF), and 287-307 (VSLG…PAIV). Disordered stretches follow at residues 497 to 570 (YPVD…QANN) and 939 to 965 (GDEA…ASSD). 2 stretches are compositionally biased toward acidic residues: residues 542–560 (QDQE…EEEQ) and 939–959 (GDEA…EEEQ).

It belongs to the UPF0182 family.

The protein resides in the cell membrane. This is UPF0182 protein Tfu_0541 from Thermobifida fusca (strain YX).